A 242-amino-acid polypeptide reads, in one-letter code: High mobility group protein homolog (242 aa).

DNA-binding regions (HMG box) lie at residues 54–122 (PKRN…EANK) and 126–197 (KPVK…IDKE).

The protein resides in the host nucleus. This Acheta domesticus (House cricket) protein is High mobility group protein homolog (EF1).